We begin with the raw amino-acid sequence, 187 residues long: Large ribosomal subunit protein bL9 (187 aa).

Residues 155 to 187 (AQRGGMVTGLREEDEEEEVEETATEEGGEETAA) are disordered. A compositionally biased stretch (acidic residues) spans 166-187 (EEDEEEEVEETATEEGGEETAA).

Belongs to the bacterial ribosomal protein bL9 family.

Functionally, binds to the 23S rRNA. The sequence is that of Large ribosomal subunit protein bL9 from Rhodospirillum centenum (strain ATCC 51521 / SW).